The sequence spans 165 residues: Endoribonuclease YbeY (165 aa).

H130, H134, and H140 together coordinate Zn(2+).

This sequence belongs to the endoribonuclease YbeY family. Requires Zn(2+) as cofactor.

Its subcellular location is the cytoplasm. In terms of biological role, single strand-specific metallo-endoribonuclease involved in late-stage 70S ribosome quality control and in maturation of the 3' terminus of the 16S rRNA. This is Endoribonuclease YbeY from Streptococcus pneumoniae serotype 4 (strain ATCC BAA-334 / TIGR4).